A 354-amino-acid chain; its full sequence is Methionine import ATP-binding protein MetN (354 aa).

One can recognise an ABC transporter domain in the interval 8–250 (LDHIDITFRQ…PKEALTQKFI (243 aa)). 42–49 (GYSGAGKS) provides a ligand contact to ATP.

It belongs to the ABC transporter superfamily. Methionine importer (TC 3.A.1.24) family. The complex is composed of two ATP-binding proteins (MetN), two transmembrane proteins (MetI) and a solute-binding protein (MetQ).

It localises to the cell membrane. It carries out the reaction L-methionine(out) + ATP + H2O = L-methionine(in) + ADP + phosphate + H(+). The catalysed reaction is D-methionine(out) + ATP + H2O = D-methionine(in) + ADP + phosphate + H(+). Its function is as follows. Part of the ABC transporter complex MetNIQ involved in methionine import. Responsible for energy coupling to the transport system. In Streptococcus pyogenes serotype M18 (strain MGAS8232), this protein is Methionine import ATP-binding protein MetN.